A 175-amino-acid chain; its full sequence is Large ribosomal subunit protein uL10 (175 aa).

Belongs to the universal ribosomal protein uL10 family. In terms of assembly, part of the ribosomal stalk of the 50S ribosomal subunit. The N-terminus interacts with L11 and the large rRNA to form the base of the stalk. The C-terminus forms an elongated spine to which L12 dimers bind in a sequential fashion forming a multimeric L10(L12)X complex.

Forms part of the ribosomal stalk, playing a central role in the interaction of the ribosome with GTP-bound translation factors. This Mycolicibacterium smegmatis (strain ATCC 700084 / mc(2)155) (Mycobacterium smegmatis) protein is Large ribosomal subunit protein uL10.